The primary structure comprises 2556 residues: Ubiquitin carboxyl-terminal hydrolase 9Y (2556 aa).

A compositionally biased stretch (polar residues) spans 1–33 (MTITTRGSPVGENESQGQTSDGQPQPSFQQNQI). The tract at residues 1-68 (MTITTRGSPV…QHEEEDPSFP (68 aa)) is disordered. Positions 34 to 44 (SSSDSSNETSP) are enriched in low complexity. Ser-587 is modified (phosphoserine). Thr-589 carries the phosphothreonine modification. The tract at residues 971-999 (NMPSSPDSSSDSSAGPPGNHSHNNYRDVS) is disordered. Low complexity predominate over residues 973 to 983 (PSSPDSSSDSS). Positions 1559 to 1958 (VGLKNAGATC…NAYILFYERM (400 aa)) constitute a USP domain. Cys-1568 acts as the Nucleophile in catalysis. Zn(2+) contacts are provided by Cys-1729, His-1731, Cys-1773, and Cys-1776. The active-site Proton acceptor is the His-1881. Ser-2447 bears the Phosphoserine mark. The interval 2513–2556 (QNYVPEQPFSGPASHHLNNPQKNDKPQETHESNEEISSCLIKDQ) is disordered. Basic and acidic residues predominate over residues 2534–2545 (KNDKPQETHESN). Ser-2549 carries the post-translational modification Phosphoserine.

It belongs to the peptidase C19 family.

It catalyses the reaction Thiol-dependent hydrolysis of ester, thioester, amide, peptide and isopeptide bonds formed by the C-terminal Gly of ubiquitin (a 76-residue protein attached to proteins as an intracellular targeting signal).. Its pathway is protein modification; protein ubiquitination. Functionally, deubiquitinase that mediates deubiquitination of target proteins. May stabilize target proteins that are important for male germ cell development. The protein is Ubiquitin carboxyl-terminal hydrolase 9Y of Mus musculus (Mouse).